The sequence spans 308 residues: Probable manganese-dependent inorganic pyrophosphatase (308 aa).

Mn(2+) is bound by residues His9, Asp13, Asp15, Asp75, His97, and Asp149.

Belongs to the PPase class C family. It depends on Mn(2+) as a cofactor.

It localises to the cytoplasm. It carries out the reaction diphosphate + H2O = 2 phosphate + H(+). This Staphylococcus carnosus (strain TM300) protein is Probable manganese-dependent inorganic pyrophosphatase.